Consider the following 138-residue polypeptide: Large ribosomal subunit protein uL16 (138 aa).

This sequence belongs to the universal ribosomal protein uL16 family. Part of the 50S ribosomal subunit.

Functionally, binds 23S rRNA and is also seen to make contacts with the A and possibly P site tRNAs. The protein is Large ribosomal subunit protein uL16 of Chlamydia muridarum (strain MoPn / Nigg).